We begin with the raw amino-acid sequence, 357 residues long: Phospho-N-acetylmuramoyl-pentapeptide-transferase (357 aa).

Helical transmembrane passes span 23-43, 70-90, 91-111, 127-147, 171-191, 196-216, 236-256, 260-280, 286-306, and 334-354; these read AIFS…YFIY, TMGG…YCNL, SNIY…IGFI, LKWK…MIKI, YLYI…VNLT, GLAI…SLFS, LAIL…FNSY, VFMG…IAIL, LLII…LQII, and LIIV…LISL.

It belongs to the glycosyltransferase 4 family. MraY subfamily. Mg(2+) serves as cofactor.

It is found in the cell inner membrane. It carries out the reaction UDP-N-acetyl-alpha-D-muramoyl-L-alanyl-gamma-D-glutamyl-meso-2,6-diaminopimeloyl-D-alanyl-D-alanine + di-trans,octa-cis-undecaprenyl phosphate = di-trans,octa-cis-undecaprenyl diphospho-N-acetyl-alpha-D-muramoyl-L-alanyl-D-glutamyl-meso-2,6-diaminopimeloyl-D-alanyl-D-alanine + UMP. Its pathway is cell wall biogenesis; peptidoglycan biosynthesis. Its function is as follows. Catalyzes the initial step of the lipid cycle reactions in the biosynthesis of the cell wall peptidoglycan: transfers peptidoglycan precursor phospho-MurNAc-pentapeptide from UDP-MurNAc-pentapeptide onto the lipid carrier undecaprenyl phosphate, yielding undecaprenyl-pyrophosphoryl-MurNAc-pentapeptide, known as lipid I. This Buchnera aphidicola subsp. Acyrthosiphon pisum (strain APS) (Acyrthosiphon pisum symbiotic bacterium) protein is Phospho-N-acetylmuramoyl-pentapeptide-transferase.